Here is a 333-residue protein sequence, read N- to C-terminus: Transaldolase (333 aa).

Lysine 136 (schiff-base intermediate with substrate) is an active-site residue.

It belongs to the transaldolase family. Type 1 subfamily. In terms of assembly, homodimer.

It localises to the cytoplasm. It catalyses the reaction D-sedoheptulose 7-phosphate + D-glyceraldehyde 3-phosphate = D-erythrose 4-phosphate + beta-D-fructose 6-phosphate. It functions in the pathway carbohydrate degradation; pentose phosphate pathway; D-glyceraldehyde 3-phosphate and beta-D-fructose 6-phosphate from D-ribose 5-phosphate and D-xylulose 5-phosphate (non-oxidative stage): step 2/3. Transaldolase is important for the balance of metabolites in the pentose-phosphate pathway. The polypeptide is Transaldolase (Acidobacterium capsulatum (strain ATCC 51196 / DSM 11244 / BCRC 80197 / JCM 7670 / NBRC 15755 / NCIMB 13165 / 161)).